Here is a 627-residue protein sequence, read N- to C-terminus: uncharacterized protein (627 aa).

One can recognise a WH1 domain in the interval 21–136; that stretch reads GISASDKILS…NSVCKRQTRS (116 aa). Positions 310–347 are disordered; that stretch reads RGSLSTPRIPTHRDSYRSATKPDTVPKQTPPPTHNSYV.

This is an uncharacterized protein from Caenorhabditis elegans.